Consider the following 182-residue polypeptide: Meiotic recombination protein REC104 (182 aa).

Interacts with REC114 and SPO11.

Potential transcriptional regulator that is required to activate expression of a number of early meiotic genes including HOP1. The polypeptide is Meiotic recombination protein REC104 (REC104) (Saccharomyces cerevisiae (strain ATCC 204508 / S288c) (Baker's yeast)).